Reading from the N-terminus, the 209-residue chain is Small ribosomal subunit protein uS4 (209 aa).

The S4 RNA-binding domain occupies 98 to 164 (SRLDNVVYRG…TPFIVARETA (67 aa)).

The protein belongs to the universal ribosomal protein uS4 family. In terms of assembly, part of the 30S ribosomal subunit. Contacts protein S5. The interaction surface between S4 and S5 is involved in control of translational fidelity.

Its function is as follows. One of the primary rRNA binding proteins, it binds directly to 16S rRNA where it nucleates assembly of the body of the 30S subunit. In terms of biological role, with S5 and S12 plays an important role in translational accuracy. This chain is Small ribosomal subunit protein uS4, found in Frankia casuarinae (strain DSM 45818 / CECT 9043 / HFP020203 / CcI3).